Reading from the N-terminus, the 440-residue chain is Proline--tRNA ligase (440 aa).

It belongs to the class-II aminoacyl-tRNA synthetase family. ProS type 2 subfamily. In terms of assembly, homodimer.

Its subcellular location is the cytoplasm. It catalyses the reaction tRNA(Pro) + L-proline + ATP = L-prolyl-tRNA(Pro) + AMP + diphosphate. Catalyzes the attachment of proline to tRNA(Pro) in a two-step reaction: proline is first activated by ATP to form Pro-AMP and then transferred to the acceptor end of tRNA(Pro). The chain is Proline--tRNA ligase from Rhizobium leguminosarum bv. trifolii (strain WSM2304).